The primary structure comprises 98 residues: ESAT-6-like protein EsxK (98 aa).

Belongs to the WXG100 family. CFP-10 subfamily. In terms of assembly, strongly interacts with EsxL to form a heterodimeric complex under reducing conditions. The complex is regulated by the redox state of EsxL.

It localises to the secreted. The polypeptide is ESAT-6-like protein EsxK (Mycobacterium tuberculosis (strain ATCC 25618 / H37Rv)).